The primary structure comprises 340 residues: MRVYYDRDCDINLIKDKKVAILGYGSQGHAHALNLRDSGAKNVVVALREGSPSAKKAEAEGLKVMGIAEAAAWCDLIMFTMPDELQAETYRKYVHDNLREGSAIAFAHGLNVHFGLIEPKPGVDVIMMAPKGPGHTVRGEYVKGGGVPCLVAVHNDATGKAMEIGLSYCSAIGGGRSGIIETNFRQECETDLFGEQAVLCGGLVELIRMGFETLVEAGYEPEMAYFECLHEVKLIVDLIYEGGIANMNYSISNTAEYGEYVSGPRILPYEETKARMKAVLTDIQTGKFVRDFMQENAVGQPFFKATRRINDEHQIEQVGEKLRGMMPWISKGKMVDRARN.

Residues 1 to 182 (MRVYYDRDCD…GGGRSGIIET (182 aa)) form the KARI N-terminal Rossmann domain. Residues 24–27 (YGSQ), Arg-48, Ser-51, Ser-53, and 83–86 (DELQ) each bind NADP(+). Residue His-108 is part of the active site. Position 134 (Gly-134) interacts with NADP(+). The KARI C-terminal knotted domain occupies 183 to 329 (NFRQECETDL…EKLRGMMPWI (147 aa)). Asp-191, Glu-195, Glu-227, and Glu-231 together coordinate Mg(2+). Ser-252 serves as a coordination point for substrate.

Belongs to the ketol-acid reductoisomerase family. Mg(2+) is required as a cofactor.

The enzyme catalyses (2R)-2,3-dihydroxy-3-methylbutanoate + NADP(+) = (2S)-2-acetolactate + NADPH + H(+). The catalysed reaction is (2R,3R)-2,3-dihydroxy-3-methylpentanoate + NADP(+) = (S)-2-ethyl-2-hydroxy-3-oxobutanoate + NADPH + H(+). It participates in amino-acid biosynthesis; L-isoleucine biosynthesis; L-isoleucine from 2-oxobutanoate: step 2/4. Its pathway is amino-acid biosynthesis; L-valine biosynthesis; L-valine from pyruvate: step 2/4. Functionally, involved in the biosynthesis of branched-chain amino acids (BCAA). Catalyzes an alkyl-migration followed by a ketol-acid reduction of (S)-2-acetolactate (S2AL) to yield (R)-2,3-dihydroxy-isovalerate. In the isomerase reaction, S2AL is rearranged via a Mg-dependent methyl migration to produce 3-hydroxy-3-methyl-2-ketobutyrate (HMKB). In the reductase reaction, this 2-ketoacid undergoes a metal-dependent reduction by NADPH to yield (R)-2,3-dihydroxy-isovalerate. This chain is Ketol-acid reductoisomerase (NADP(+)), found in Cereibacter sphaeroides (strain ATCC 17023 / DSM 158 / JCM 6121 / CCUG 31486 / LMG 2827 / NBRC 12203 / NCIMB 8253 / ATH 2.4.1.) (Rhodobacter sphaeroides).